Reading from the N-terminus, the 1358-residue chain is Protein STU1 (1358 aa).

2 disordered regions span residues 915-950 and 970-990; these read FVAD…SHGF and QPET…DESN. A compositionally biased stretch (basic and acidic residues) spans 926 to 949; the sequence is DDTKKNGSDVVDHEEIRDHEESHG. The segment covering 973–990 has biased composition (acidic residues); the sequence is TVDENVDPMEVDSPDESN.

It belongs to the CLASP family. As to quaternary structure, interacts with microtubules.

It localises to the cytoplasm. It is found in the cytoskeleton. The protein localises to the nucleus. Its subcellular location is the spindle. Microtubule binding protein that promotes the stabilization of dynamic microtubules. Required for mitotic spindle formation. The polypeptide is Protein STU1 (STU1) (Kluyveromyces lactis (strain ATCC 8585 / CBS 2359 / DSM 70799 / NBRC 1267 / NRRL Y-1140 / WM37) (Yeast)).